A 370-amino-acid chain; its full sequence is tRNA 2-selenouridine synthase (370 aa).

One can recognise a Rhodanese domain in the interval 12 to 136 (FLDDVPMMDM…MRTFLLETTQ (125 aa)). The active-site S-selanylcysteine intermediate is C95.

The protein belongs to the SelU family. Monomer.

It carries out the reaction 5-methylaminomethyl-2-thiouridine(34) in tRNA + selenophosphate + (2E)-geranyl diphosphate + H2O + H(+) = 5-methylaminomethyl-2-selenouridine(34) in tRNA + (2E)-thiogeraniol + phosphate + diphosphate. The enzyme catalyses 5-methylaminomethyl-2-thiouridine(34) in tRNA + (2E)-geranyl diphosphate = 5-methylaminomethyl-S-(2E)-geranyl-thiouridine(34) in tRNA + diphosphate. It catalyses the reaction 5-methylaminomethyl-S-(2E)-geranyl-thiouridine(34) in tRNA + selenophosphate + H(+) = 5-methylaminomethyl-2-(Se-phospho)selenouridine(34) in tRNA + (2E)-thiogeraniol. The catalysed reaction is 5-methylaminomethyl-2-(Se-phospho)selenouridine(34) in tRNA + H2O = 5-methylaminomethyl-2-selenouridine(34) in tRNA + phosphate. Its function is as follows. Involved in the post-transcriptional modification of the uridine at the wobble position (U34) of tRNA(Lys), tRNA(Glu) and tRNA(Gln). Catalyzes the conversion of 2-thiouridine (S2U-RNA) to 2-selenouridine (Se2U-RNA). Acts in a two-step process involving geranylation of 2-thiouridine (S2U) to S-geranyl-2-thiouridine (geS2U) and subsequent selenation of the latter derivative to 2-selenouridine (Se2U) in the tRNA chain. This chain is tRNA 2-selenouridine synthase, found in Pseudomonas putida (strain ATCC 700007 / DSM 6899 / JCM 31910 / BCRC 17059 / LMG 24140 / F1).